A 368-amino-acid chain; its full sequence is D-alanine--D-alanine ligase (368 aa).

Residues lysine 141–glutamate 350 enclose the ATP-grasp domain. Glutamate 176–glutamate 231 contributes to the ATP binding site. Residues aspartate 303, glutamate 317, and asparagine 319 each contribute to the Mg(2+) site.

It belongs to the D-alanine--D-alanine ligase family. Requires Mg(2+) as cofactor. It depends on Mn(2+) as a cofactor.

The protein resides in the cytoplasm. It carries out the reaction 2 D-alanine + ATP = D-alanyl-D-alanine + ADP + phosphate + H(+). It participates in cell wall biogenesis; peptidoglycan biosynthesis. Cell wall formation. This chain is D-alanine--D-alanine ligase, found in Treponema denticola (strain ATCC 35405 / DSM 14222 / CIP 103919 / JCM 8153 / KCTC 15104).